Consider the following 506-residue polypeptide: uncharacterized protein (506 aa).

Disordered stretches follow at residues 104-144 and 397-456; these read PNSS…ATSS and QQQK…DQLP. A compositionally biased stretch (low complexity) spans 130–144; the sequence is ESSPTLSSSSLATSS. Positions 405–443 are enriched in basic and acidic residues; it reads IKDEDKNEKENKSENEEKEKEKEKEKEKEKEKEKEKEKE. A coiled-coil region spans residues 405–455; sequence IKDEDKNEKENKSENEEKEKEKEKEKEKEKEKEKEKEKENEEGEEDNGDQL.

This is an uncharacterized protein from Dictyostelium discoideum (Social amoeba).